A 245-amino-acid polypeptide reads, in one-letter code: MMLFVDVGNTAMKWRYRDGDVIHQGGGRHEREWSRVVELMLRSLVGMPSEIWVASVAGPEADETIAYYLKEAIRCEPHFYYSCQSDFGVESCYPEPRKLGVDRWVAMIEGFQRYGASIIIDCGSALTIDAVDSRGTFLGGYIVPGLGMLRGALLRDTSDVHIEPGMAQLGLGRSTGECVHNGLLRMSVAFVTEVVLELRQVLDDTCKVLVTGGDAPELIGAFTFEFLHAPDLVLDGLERVAARQQ.

An ATP-binding site is contributed by 6 to 13; that stretch reads DVGNTAMK. Residues tyrosine 93 and 100-103 each bind substrate; that span reads GVDR. Aspartate 102 acts as the Proton acceptor in catalysis. Aspartate 121 lines the K(+) pocket. Serine 124 lines the ATP pocket. Threonine 175 contacts substrate.

Belongs to the type III pantothenate kinase family. As to quaternary structure, homodimer. The cofactor is NH4(+). K(+) serves as cofactor.

The protein resides in the cytoplasm. The catalysed reaction is (R)-pantothenate + ATP = (R)-4'-phosphopantothenate + ADP + H(+). The protein operates within cofactor biosynthesis; coenzyme A biosynthesis; CoA from (R)-pantothenate: step 1/5. Functionally, catalyzes the phosphorylation of pantothenate (Pan), the first step in CoA biosynthesis. This is Type III pantothenate kinase from Alcanivorax borkumensis (strain ATCC 700651 / DSM 11573 / NCIMB 13689 / SK2).